Consider the following 140-residue polypeptide: ATP synthase epsilon chain (140 aa).

This sequence belongs to the ATPase epsilon chain family. In terms of assembly, F-type ATPases have 2 components, CF(1) - the catalytic core - and CF(0) - the membrane proton channel. CF(1) has five subunits: alpha(3), beta(3), gamma(1), delta(1), epsilon(1). CF(0) has three main subunits: a, b and c.

It is found in the cell membrane. Functionally, produces ATP from ADP in the presence of a proton gradient across the membrane. The protein is ATP synthase epsilon chain of Baumannia cicadellinicola subsp. Homalodisca coagulata.